Here is a 283-residue protein sequence, read N- to C-terminus: Adenylate dimethylallyltransferase (283 aa).

The protein belongs to the isopentenyl transferase family.

It catalyses the reaction dimethylallyl diphosphate + AMP = N(6)-(dimethylallyl)adenosine 5'-phosphate + diphosphate. Transfers dimethylallyl groups to AMP as part of the biosynthesis of cytokinin phytohormones like isopentenyl adenine or discadenine which controle spore formation and viability. The polypeptide is Adenylate dimethylallyltransferase (iptA) (Dictyostelium discoideum (Social amoeba)).